Reading from the N-terminus, the 75-residue chain is Small ribosomal subunit protein bS18 (75 aa).

This sequence belongs to the bacterial ribosomal protein bS18 family. Part of the 30S ribosomal subunit. Forms a tight heterodimer with protein bS6.

Functionally, binds as a heterodimer with protein bS6 to the central domain of the 16S rRNA, where it helps stabilize the platform of the 30S subunit. The chain is Small ribosomal subunit protein bS18 from Buchnera aphidicola subsp. Acyrthosiphon pisum (strain 5A).